A 638-amino-acid polypeptide reads, in one-letter code: XK-related protein 6 (638 aa).

2 disordered regions span residues 24–43 and 82–117; these read VGSGEEDGEPGGGGCGGGDG and RSAAAADGGDQPLQPPGAAGRHPPTPSAGRPQPASP. A compositionally biased stretch (gly residues) spans 33-43; it reads PGGGGCGGGDG. The next 7 membrane-spanning stretches (helical) occupy residues 127-147, 158-178, 315-335, 369-389, 410-430, 439-459, and 470-490; these read LWIVLALLVFFGDVGTDLWLA, CFGLTLFFVLVPSLLVQSLSF, TLPCVSSVTSLMSLAWVLASY, VISFALFASIFQLYFGIFVVV, WEEILFNMVVGIVYIFCWFNV, MFAYYTIVLTENAALTFLWYF, and AVPALCCVFVSFVAGITLMLL.

Belongs to the XK family.

It localises to the cell membrane. This chain is XK-related protein 6, found in Mus musculus (Mouse).